The primary structure comprises 103 residues: Small ribosomal subunit protein uS14c (103 aa).

Residues 34–56 (KVSPLSLSEKTKMREKLQSLPRN) form a disordered region.

Belongs to the universal ribosomal protein uS14 family. Part of the 30S ribosomal subunit.

The protein resides in the plastid. Its subcellular location is the chloroplast. Its function is as follows. Binds 16S rRNA, required for the assembly of 30S particles. The polypeptide is Small ribosomal subunit protein uS14c (Triticum aestivum (Wheat)).